Consider the following 1227-residue polypeptide: Protein U7 (1227 aa).

The protein belongs to the herpesviridae US22 family.

The sequence is that of Protein U7 (U7/U5) from Homo sapiens (Human).